The sequence spans 221 residues: N-(5'-phosphoribosyl)anthranilate isomerase (221 aa).

It belongs to the TrpF family.

The catalysed reaction is N-(5-phospho-beta-D-ribosyl)anthranilate = 1-(2-carboxyphenylamino)-1-deoxy-D-ribulose 5-phosphate. The protein operates within amino-acid biosynthesis; L-tryptophan biosynthesis; L-tryptophan from chorismate: step 3/5. The chain is N-(5'-phosphoribosyl)anthranilate isomerase from Parabacteroides distasonis (strain ATCC 8503 / DSM 20701 / CIP 104284 / JCM 5825 / NCTC 11152).